Consider the following 799-residue polypeptide: Probable inorganic carbon transporter subunit DabA (799 aa).

Zn(2+) contacts are provided by cysteine 303, aspartate 305, histidine 479, and cysteine 494. Positions 574–598 are disordered; sequence AGAAAERSEALNGADPDKGVSETAS.

The protein belongs to the inorganic carbon transporter (TC 9.A.2) DabA family. In terms of assembly, forms a complex with DabB. Zn(2+) is required as a cofactor.

The protein localises to the cell membrane. In terms of biological role, part of an energy-coupled inorganic carbon pump. The protein is Probable inorganic carbon transporter subunit DabA of Natronomonas pharaonis (strain ATCC 35678 / DSM 2160 / CIP 103997 / JCM 8858 / NBRC 14720 / NCIMB 2260 / Gabara) (Halobacterium pharaonis).